The sequence spans 100 residues: uncharacterized protein (100 aa).

It is found in the secreted. This is an uncharacterized protein from Mycobacterium leprae (strain TN).